The primary structure comprises 557 residues: Hepatocyte nuclear factor 1-beta (557 aa).

The segment at 1 to 31 is dimerization; that stretch reads MVSKLTSLQQELLSALLSSGVTKEVLVQALE. Positions 1–32 constitute an HNF-p1 domain; it reads MVSKLTSLQQELLSALLSSGVTKEVLVQALEE. S49, S52, S75, and S80 each carry phosphoserine. The disordered stretch occupies residues 64–85; the sequence is TLTNGHAKGRLSGDEGSEDGDD. The 96-residue stretch at 93-188 folds into the POU-specific atypical domain; the sequence is KELQALNTEE…ILRQFNQTVQ (96 aa). A DNA-binding region (homeobox; HNF1-type) is located at residues 231-311; the sequence is MRRNRFKWGP…NRRKEEAFRQ (81 aa). The tract at residues 324-370 is disordered; it reads HSLNPLLSHGSPHHQPSSSPPNKLSGVRYSQQGNNEVTSSSTISHHG. Low complexity predominate over residues 328–344; that stretch reads PLLSHGSPHHQPSSSPP. A compositionally biased stretch (polar residues) spans 351-370; that stretch reads RYSQQGNNEVTSSSTISHHG.

This sequence belongs to the HNF1 homeobox family. Binds DNA as a dimer. Can form homodimer or heterodimer with HNF1-alpha. Interacts (via HNF-p1 domain) with PCBD1; the interaction increases its transactivation activity.

It localises to the nucleus. Functionally, transcription factor that binds to the inverted palindrome 5'-GTTAATNATTAAC-3'. Binds to the FPC element in the cAMP regulatory unit of the PLAU gene. Transcriptional activity is increased by coactivator PCBD1. The sequence is that of Hepatocyte nuclear factor 1-beta (HNF1B) from Pongo abelii (Sumatran orangutan).